Here is a 353-residue protein sequence, read N- to C-terminus: UDP-3-O-acylglucosamine N-acyltransferase (353 aa).

His246 (proton acceptor) is an active-site residue.

Belongs to the transferase hexapeptide repeat family. LpxD subfamily. As to quaternary structure, homotrimer.

It catalyses the reaction a UDP-3-O-[(3R)-3-hydroxyacyl]-alpha-D-glucosamine + a (3R)-hydroxyacyl-[ACP] = a UDP-2-N,3-O-bis[(3R)-3-hydroxyacyl]-alpha-D-glucosamine + holo-[ACP] + H(+). It participates in bacterial outer membrane biogenesis; LPS lipid A biosynthesis. In terms of biological role, catalyzes the N-acylation of UDP-3-O-acylglucosamine using 3-hydroxyacyl-ACP as the acyl donor. Is involved in the biosynthesis of lipid A, a phosphorylated glycolipid that anchors the lipopolysaccharide to the outer membrane of the cell. This is UDP-3-O-acylglucosamine N-acyltransferase from Chlorobaculum tepidum (strain ATCC 49652 / DSM 12025 / NBRC 103806 / TLS) (Chlorobium tepidum).